A 309-amino-acid polypeptide reads, in one-letter code: Olfactory receptor 5AK2 (309 aa).

Residues 1-25 (MTLGNSTEVTEFYLLGFGAQHEFWC) are Extracellular-facing. Residue N5 is glycosylated (N-linked (GlcNAc...) asparagine). Residues 26–46 (ILFIVFLLIYVTSIMGNSGII) traverse the membrane as a helical segment. Over 47 to 54 (LLINTDSR) the chain is Cytoplasmic. Residues 55–75 (FQTLTYFFLQHLAFVDICYTS) traverse the membrane as a helical segment. Topologically, residues 76–99 (AITPKMLQSFTEEKNLMLFQGCVI) are extracellular. An intrachain disulfide couples C97 to C189. The helical transmembrane segment at 100-120 (QFLVYATFATSDCYLLAMMAV) threads the bilayer. At 121 to 133 (DPYVAICKPLHYT) the chain is on the cytoplasmic side. The chain crosses the membrane as a helical span at residues 134–154 (VIMSRTVCIRLVAGSYIMGSI). N-linked (GlcNAc...) asparagine glycosylation occurs at N155. Over 155–196 (NASVQTGFTCSLSFCKSNSINHFFCDVPPILALSCSNVDINI) the chain is Extracellular. Residues 197–217 (MLLVVFVGSNLIFTGLVVIFS) traverse the membrane as a helical segment. Over 218–237 (YIYIMATILKMSSSAGRKKS) the chain is Cytoplasmic. Residues 238 to 258 (FSTCASHLTAVTIFYGTLSYM) traverse the membrane as a helical segment. The Extracellular segment spans residues 259-271 (YLQSHSNNSQENM). The N-linked (GlcNAc...) asparagine glycan is linked to N265. The helical transmembrane segment at 272 to 292 (KVAFIFYGTVIPMLNPLIYSL) threads the bilayer. The Cytoplasmic segment spans residues 293 to 309 (RNKEVKEALKVIGKKLF).

Belongs to the G-protein coupled receptor 1 family.

The protein localises to the cell membrane. Functionally, odorant receptor. The protein is Olfactory receptor 5AK2 (OR5AK2) of Homo sapiens (Human).